Consider the following 926-residue polypeptide: Sperm-associated antigen 1 (926 aa).

3 TPR repeats span residues A209–V242, A244–N275, and V276–N309. The tract at residues E318–G452 is disordered. Phosphoserine is present on residues S347 and S354. The span at G352–A368 shows a compositional bias: basic and acidic residues. The span at E369–P379 shows a compositional bias: low complexity. S423 is modified (phosphoserine). Over residues A428–G441 the composition is skewed to gly residues. TPR repeat units follow at residues P445–A478, S487–S520, K522–L554, F623–E656, C657–N690, and K692–I724. Basic and acidic residues-rich tracts occupy residues I758 to G769 and K784 to P799. The tract at residues I758–A801 is disordered. GTP is bound at residue A781–S788. S791 carries the post-translational modification Phosphoserine.

In terms of tissue distribution, present in most tissues, including lung, with the strongest expression in brain, colon, kidney, and testis. In sperm and testis, detected in particular in pachytene primary spermatocytes. Up-regulated in pancreatic tumor tissues and not in normal pancreatic tissue.

It localises to the cytoplasm. The protein localises to the dynein axonemal particle. Functionally, may play a role in the cytoplasmic assembly of the ciliary dynein arms. May play a role in fertilization. Binds GTP and has GTPase activity. The polypeptide is Sperm-associated antigen 1 (SPAG1) (Homo sapiens (Human)).